The chain runs to 180 residues: ADP-ribosylation factor 4 (180 aa).

Gly2 is lipidated: N-myristoyl glycine. GTP contacts are provided by residues 24 to 31, 67 to 71, and 126 to 129; these read GLDAAGKT, DVGGQ, and NKQD. Residue Ser147 is modified to Phosphoserine.

This sequence belongs to the small GTPase superfamily. Arf family. In terms of assembly, forms a complex containing RAB11A, ASAP1, RAB3IP, RAP11FIP3 and ARF4; the complex promotes preciliary trafficking; the complex binds to RHO in photoreceptor cells and promotes RHO ciliary transport.

Its subcellular location is the golgi apparatus. The protein localises to the membrane. GTP-binding protein that functions as an allosteric activator of the cholera toxin catalytic subunit, an ADP-ribosyltransferase. Involved in protein trafficking; may modulate vesicle budding and uncoating within the Golgi apparatus. Part of the ciliary targeting complex containing Rab11, ASAP1, Rabin8/RAB3IP, RAB11FIP3 and ARF4, which direct preciliary vesicle trafficking to mother centriole and ciliogenesis initiation. This chain is ADP-ribosylation factor 4 (ARF4), found in Bos taurus (Bovine).